Reading from the N-terminus, the 142-residue chain is Hemoglobin subunit alpha (142 aa).

Residues G1–R142 form the Globin domain. H59 is a binding site for O2. Residue H88 coordinates heme b.

Belongs to the globin family. As to quaternary structure, heterotetramer of two alpha chains and two beta chains (an easy dimerization is also reported). Red blood cells.

Functionally, involved in oxygen transport from the lung to the various peripheral tissues. This is Hemoglobin subunit alpha (HBA) from Latimeria chalumnae (Coelacanth).